Here is a 159-residue protein sequence, read N- to C-terminus: Cytochrome c-type biogenesis protein CcmE (159 aa).

Over 1 to 8 (MNLRRKNR) the chain is Cytoplasmic. A helical; Signal-anchor for type II membrane protein transmembrane segment spans residues 9-29 (LWVVCAVLAGLALTTALVLYA). The Periplasmic portion of the chain corresponds to 30–159 (LRANIDLFYT…PQRADKDTSS (130 aa)). Residues 129 to 159 (KHDENYTPPEVEKAMQENHRRPQRADKDTSS) are disordered. 2 residues coordinate heme: histidine 130 and tyrosine 134.

It belongs to the CcmE/CycJ family.

The protein localises to the cell inner membrane. Its function is as follows. Heme chaperone required for the biogenesis of c-type cytochromes. Transiently binds heme delivered by CcmC and transfers the heme to apo-cytochromes in a process facilitated by CcmF and CcmH. This is Cytochrome c-type biogenesis protein CcmE from Salmonella paratyphi A (strain ATCC 9150 / SARB42).